The primary structure comprises 413 residues: Protein arginine N-methyltransferase 2 (413 aa).

A disordered region spans residues 148–187 (LDGSDTEMGDKGGSARDVPASADSAPADSAGHSSSEPTAV). Positions 162–182 (ARDVPASADSAPADSAGHSSS) are enriched in low complexity. The 222-residue stretch at 192–413 (TAAHQDTYLQ…HYYHPEISFQ (222 aa)) folds into the RMT2 domain. Residues Tyr199, Met229, 252-257 (FGMGII), 273-275 (EAH), 300-301 (WQ), and Asp321 each bind S-adenosyl-L-methionine.

The protein belongs to the class I-like SAM-binding methyltransferase superfamily. RMT2 methyltransferase family. In terms of assembly, monomer.

The protein resides in the cytoplasm. It localises to the nucleus. In terms of biological role, S-adenosyl-L-methionine-dependent protein-arginine N-methyltransferase that methylates the delta-nitrogen atom of arginine residues to form N5-methylarginine (type IV) in target proteins. Monomethylates ribosomal protein L12. The chain is Protein arginine N-methyltransferase 2 from Eremothecium gossypii (strain ATCC 10895 / CBS 109.51 / FGSC 9923 / NRRL Y-1056) (Yeast).